A 248-amino-acid polypeptide reads, in one-letter code: Calpain small subunit 2 (248 aa).

13 residues coordinate Ca(2+): Ala-89, Asp-92, Glu-94, Asp-117, Asp-132, Asp-134, Thr-136, Lys-138, Glu-143, Asp-162, Asp-164, Ser-166, and Asp-205. 4 consecutive EF-hand domains span residues 119-152 (FSLD…NNIK), 149-184 (NNIK…AGFQ), 185-213 (LNEQ…ISCL), and 214-248 (VRLD…TMYS).

Heterodimer of a large (catalytic) and a small (regulatory) subunit.

Its subcellular location is the cytoplasm. It localises to the cell membrane. In terms of biological role, calcium-regulated non-lysosomal thiol-protease which catalyzes limited proteolysis of substrates involved in cytoskeletal remodeling and signal transduction. This small subunit may act as a tissue-specific chaperone of the large subunit, possibly by helping it fold into its correct conformation for activity. This chain is Calpain small subunit 2 (CAPNS2), found in Homo sapiens (Human).